The sequence spans 351 residues: Translation initiation factor eIF2B subunit beta (351 aa).

The protein belongs to the eIF-2B alpha/beta/delta subunits family. Component of the translation initiation factor 2B (eIF2B) complex which is a heterodecamer of two sets of five different subunits: alpha, beta, gamma, delta and epsilon. Subunits alpha, beta and delta comprise a regulatory subcomplex and subunits epsilon and gamma comprise a catalytic subcomplex. Within the complex, the hexameric regulatory complex resides at the center, with the two heterodimeric catalytic subcomplexes bound on opposite sides.

Its subcellular location is the cytoplasm. It localises to the cytosol. Its activity is regulated as follows. Activated by the chemical integrated stress response (ISR) inhibitor ISRIB which stimulates guanine nucleotide exchange factor activity for both phosphorylated and unphosphorylated eIF2. In terms of biological role, acts as a component of the translation initiation factor 2B (eIF2B) complex, which catalyzes the exchange of GDP for GTP on eukaryotic initiation factor 2 (eIF2) gamma subunit. Its guanine nucleotide exchange factor activity is repressed when bound to eIF2 complex phosphorylated on the alpha subunit, thereby limiting the amount of methionyl-initiator methionine tRNA available to the ribosome and consequently global translation is repressed. This is Translation initiation factor eIF2B subunit beta (EIF2B2) from Bos taurus (Bovine).